The chain runs to 304 residues: Phosphonates import ATP-binding protein PhnC 1 (304 aa).

An ABC transporter domain is found at 4-240; that stretch reads VSLQNVTKLF…VIDDLYYAGS (237 aa). 37–44 is a binding site for ATP; it reads GPSGAGKS. The disordered stretch occupies residues 240–304; sequence SESTPVSHGD…TETDTGEAQL (65 aa). A compositionally biased stretch (polar residues) spans 263-272; that stretch reads TSVSSDMETT. The span at 289-304 shows a compositional bias: acidic residues; that stretch reads TDTETDTETDTGEAQL.

It belongs to the ABC transporter superfamily. Phosphonates importer (TC 3.A.1.9.1) family. As to quaternary structure, the complex is composed of two ATP-binding proteins (PhnC), two transmembrane proteins (PhnE) and a solute-binding protein (PhnD).

The protein localises to the cell membrane. The catalysed reaction is phosphonate(out) + ATP + H2O = phosphonate(in) + ADP + phosphate + H(+). Functionally, part of the ABC transporter complex PhnCDE involved in phosphonates import. Responsible for energy coupling to the transport system. The chain is Phosphonates import ATP-binding protein PhnC 1 from Haloquadratum walsbyi (strain DSM 16790 / HBSQ001).